A 250-amino-acid polypeptide reads, in one-letter code: 3-deoxy-manno-octulosonate cytidylyltransferase (250 aa).

Belongs to the KdsB family.

It localises to the cytoplasm. The enzyme catalyses 3-deoxy-alpha-D-manno-oct-2-ulosonate + CTP = CMP-3-deoxy-beta-D-manno-octulosonate + diphosphate. Its pathway is nucleotide-sugar biosynthesis; CMP-3-deoxy-D-manno-octulosonate biosynthesis; CMP-3-deoxy-D-manno-octulosonate from 3-deoxy-D-manno-octulosonate and CTP: step 1/1. It participates in bacterial outer membrane biogenesis; lipopolysaccharide biosynthesis. Functionally, activates KDO (a required 8-carbon sugar) for incorporation into bacterial lipopolysaccharide in Gram-negative bacteria. This chain is 3-deoxy-manno-octulosonate cytidylyltransferase, found in Rhodopirellula baltica (strain DSM 10527 / NCIMB 13988 / SH1).